A 140-amino-acid polypeptide reads, in one-letter code: Small ribosomal subunit protein uS12 (140 aa).

At aspartate 102 the chain carries 3-methylthioaspartic acid.

It belongs to the universal ribosomal protein uS12 family. Part of the 30S ribosomal subunit. Contacts proteins S8 and S17. May interact with IF1 in the 30S initiation complex.

Its function is as follows. With S4 and S5 plays an important role in translational accuracy. Functionally, interacts with and stabilizes bases of the 16S rRNA that are involved in tRNA selection in the A site and with the mRNA backbone. Located at the interface of the 30S and 50S subunits, it traverses the body of the 30S subunit contacting proteins on the other side and probably holding the rRNA structure together. The combined cluster of proteins S8, S12 and S17 appears to hold together the shoulder and platform of the 30S subunit. The polypeptide is Small ribosomal subunit protein uS12 (Bacillus anthracis (strain A0248)).